The primary structure comprises 95 residues: Small ribosomal subunit protein bS16 (95 aa).

This sequence belongs to the bacterial ribosomal protein bS16 family.

This is Small ribosomal subunit protein bS16 from Mycoplasma genitalium (strain ATCC 33530 / DSM 19775 / NCTC 10195 / G37) (Mycoplasmoides genitalium).